Consider the following 551-residue polypeptide: Arginine--tRNA ligase (551 aa).

A 'HIGH' region motif is present at residues 125–135 (ANPTGPLHIGH).

This sequence belongs to the class-I aminoacyl-tRNA synthetase family. Monomer.

The protein localises to the cytoplasm. The enzyme catalyses tRNA(Arg) + L-arginine + ATP = L-arginyl-tRNA(Arg) + AMP + diphosphate. This Nitratidesulfovibrio vulgaris (strain DSM 19637 / Miyazaki F) (Desulfovibrio vulgaris) protein is Arginine--tRNA ligase.